The following is a 256-amino-acid chain: Acetyl-coenzyme A carboxylase carboxyl transferase subunit alpha (256 aa).

Residues 1–236 (MTDVARILKE…KSHLIDEITQ (236 aa)) enclose the CoA carboxyltransferase C-terminal domain.

This sequence belongs to the AccA family. As to quaternary structure, acetyl-CoA carboxylase is a heterohexamer composed of biotin carboxyl carrier protein (AccB), biotin carboxylase (AccC) and two subunits each of ACCase subunit alpha (AccA) and ACCase subunit beta (AccD).

It localises to the cytoplasm. It catalyses the reaction N(6)-carboxybiotinyl-L-lysyl-[protein] + acetyl-CoA = N(6)-biotinyl-L-lysyl-[protein] + malonyl-CoA. Its pathway is lipid metabolism; malonyl-CoA biosynthesis; malonyl-CoA from acetyl-CoA: step 1/1. In terms of biological role, component of the acetyl coenzyme A carboxylase (ACC) complex. First, biotin carboxylase catalyzes the carboxylation of biotin on its carrier protein (BCCP) and then the CO(2) group is transferred by the carboxyltransferase to acetyl-CoA to form malonyl-CoA. This is Acetyl-coenzyme A carboxylase carboxyl transferase subunit alpha from Streptococcus equi subsp. equi (strain 4047).